Reading from the N-terminus, the 221-residue chain is Enolase-phosphatase E1 (221 aa).

The protein belongs to the HAD-like hydrolase superfamily. MasA/MtnC family. In terms of assembly, monomer. The cofactor is Mg(2+).

The enzyme catalyses 5-methylsulfanyl-2,3-dioxopentyl phosphate + H2O = 1,2-dihydroxy-5-(methylsulfanyl)pent-1-en-3-one + phosphate. The protein operates within amino-acid biosynthesis; L-methionine biosynthesis via salvage pathway; L-methionine from S-methyl-5-thio-alpha-D-ribose 1-phosphate: step 3/6. It functions in the pathway amino-acid biosynthesis; L-methionine biosynthesis via salvage pathway; L-methionine from S-methyl-5-thio-alpha-D-ribose 1-phosphate: step 4/6. Its function is as follows. Bifunctional enzyme that catalyzes the enolization of 2,3-diketo-5-methylthiopentyl-1-phosphate (DK-MTP-1-P) into the intermediate 2-hydroxy-3-keto-5-methylthiopentenyl-1-phosphate (HK-MTPenyl-1-P), which is then dephosphorylated to form the acireductone 1,2-dihydroxy-3-keto-5-methylthiopentene (DHK-MTPene). The polypeptide is Enolase-phosphatase E1 (Hydrogenobaculum sp. (strain Y04AAS1)).